The following is a 310-amino-acid chain: Ornithine carbamoyltransferase (310 aa).

Residues 56–59 (STRT), glutamine 83, arginine 107, and 134–137 (HPCQ) each bind carbamoyl phosphate. L-ornithine is bound by residues asparagine 165, aspartate 229, and 233–234 (SM). Carbamoyl phosphate is bound by residues 269-270 (CL) and arginine 297.

This sequence belongs to the aspartate/ornithine carbamoyltransferase superfamily. OTCase family.

It is found in the cytoplasm. The catalysed reaction is carbamoyl phosphate + L-ornithine = L-citrulline + phosphate + H(+). Its pathway is amino-acid biosynthesis; L-arginine biosynthesis; L-arginine from L-ornithine and carbamoyl phosphate: step 1/3. Its function is as follows. Reversibly catalyzes the transfer of the carbamoyl group from carbamoyl phosphate (CP) to the N(epsilon) atom of ornithine (ORN) to produce L-citrulline. The protein is Ornithine carbamoyltransferase of Symbiobacterium thermophilum (strain DSM 24528 / JCM 14929 / IAM 14863 / T).